Consider the following 515-residue polypeptide: RNA-splicing ligase RtcB homolog (515 aa).

Residues aspartate 129, cysteine 132, histidine 237, histidine 269, and histidine 363 each coordinate Mn(2+). Residue 236-240 (NHYAE) coordinates GMP. GMP contacts are provided by residues 363–364 (HN), 412–415 (GGTM), serine 419, 438–441 (HGAG), and lysine 514. The active-site GMP-histidine intermediate is the histidine 438.

This sequence belongs to the RtcB family. In terms of assembly, catalytic component of the tRNA-splicing ligase complex. Requires Mn(2+) as cofactor.

The catalysed reaction is a 3'-end 3'-phospho-ribonucleotide-RNA + a 5'-end dephospho-ribonucleoside-RNA + GTP = a ribonucleotidyl-ribonucleotide-RNA + GMP + diphosphate. It carries out the reaction a 3'-end 2',3'-cyclophospho-ribonucleotide-RNA + a 5'-end dephospho-ribonucleoside-RNA + GTP + H2O = a ribonucleotidyl-ribonucleotide-RNA + GMP + diphosphate + H(+). Functionally, catalytic subunit of the tRNA-splicing ligase complex that acts by directly joining spliced tRNA halves to mature-sized tRNAs by incorporating the precursor-derived splice junction phosphate into the mature tRNA as a canonical 3',5'-phosphodiester. May act as an RNA ligase with broad substrate specificity, and may function toward other RNAs. In Ostreococcus tauri, this protein is RNA-splicing ligase RtcB homolog.